The sequence spans 177 residues: MPQAKKSTETLAPAPPGRSRSLLRSLPSPALCCACGLCVLLAGLNVTLVGAFAAFLPGHNVPLVVGPALLVLALGFFAACCVCSRRGPVPRARSSATAGQGGGRPGTVALEMESSERTAQDTTAVQLSPAASAASSGRSSPGPGLFALDPPAPATAAPYLPRTEGTQLNFPRDPAAS.

The tract at residues 1 to 20 (MPQAKKSTETLAPAPPGRSR) is disordered. Transmembrane regions (helical) follow at residues 36–56 (GLCV…AAFL) and 63–83 (LVVG…CCVC). The tract at residues 113 to 177 (ESSERTAQDT…LNFPRDPAAS (65 aa)) is disordered. Residues 128–161 (SPAASAASSGRSSPGPGLFALDPPAPATAAPYLP) are compositionally biased toward low complexity.

It is found in the membrane. This is Transmembrane protein 275 from Mus musculus (Mouse).